The sequence spans 426 residues: Lactate racemase (426 aa).

D72–R75 serves as a coordination point for Ni(II)-pyridinium-3,5-bisthiocarboxylate mononucleotide. Active-site proton donor/acceptor residues include H108 and H174. Positions 184 and 200 each coordinate Ni(II)-pyridinium-3,5-bisthiocarboxylate mononucleotide. The substrate site is built by Q295 and K298.

This sequence belongs to the lactate racemase family. In terms of assembly, homodimer. It depends on Ni(II)-pyridinium-3,5-bisthiocarboxylate mononucleotide as a cofactor.

It catalyses the reaction (S)-lactate = (R)-lactate. Activation of the apo-enzyme requires the three accessory proteins LarB, LarE and LarC, that are involved in the biosynthesis of the nickel-pincer cofactor of LarA. Functionally, catalyzes the interconversion between the D- and L-isomers of lactate. This chain is Lactate racemase, found in Thermoanaerobacterium thermosaccharolyticum (strain ATCC 7956 / DSM 571 / NCIMB 9385 / NCA 3814 / NCTC 13789 / WDCM 00135 / 2032) (Clostridium thermosaccharolyticum).